We begin with the raw amino-acid sequence, 102 residues long: Probable non-specific lipid-transfer protein (102 aa).

An N-terminal signal peptide occupies residues 1–35 (MAMAMGMAMRKEAAVAVMMVMVVTLAAGADAGAGA). 4 disulfide bridges follow: cysteine 37–cysteine 71, cysteine 45–cysteine 59, cysteine 60–cysteine 95, and cysteine 69–cysteine 102.

It belongs to the plant LTP family. B11E subfamily. As to expression, aleurone.

Potential phospholipid transfer protein. The chain is Probable non-specific lipid-transfer protein (LTP2) from Hordeum vulgare (Barley).